A 449-amino-acid chain; its full sequence is uncharacterized protein (449 aa).

2 disordered regions span residues 1–58 and 71–125; these read MVKR…SLSS and EALE…VVEL. Residues 30 to 46 are compositionally biased toward basic and acidic residues; it reads KQRDELREKQKRKREDS. A compositionally biased stretch (acidic residues) spans 103 to 124; sequence SDDDDDDNEEEDDNGFEDQVVE.

It belongs to the bystin family.

This is an uncharacterized protein from Caenorhabditis elegans.